The sequence spans 346 residues: High mobility group protein 20A (346 aa).

Polar residues-rich tracts occupy residues 1–10 and 55–65; these read MESLMASSTL and SQGQLLQSEAS. Disordered regions lie at residues 1-112 and 178-210; these read MESL…YVRF and FSRKTQDRQKGKSHRQDAARQATHDHEKETEVK. The span at 71–81 shows a compositional bias: basic and acidic residues; that stretch reads NEQRPEDEQRS. The segment covering 82 to 95 has biased composition (basic residues); it reads KRGGWSKGRKRKKP. The segment at residues 102–170 is a DNA-binding region (HMG box); the sequence is PKSPLTGYVR…RYMKELEQYQ (69 aa). Serine 104 carries the phosphoserine modification. Residues 181 to 210 are compositionally biased toward basic and acidic residues; the sequence is KTQDRQKGKSHRQDAARQATHDHEKETEVK. Residues 228–272 are a coiled coil; sequence SKAREAELRQLRKSNMEFEERNAALQKHVESMRTAVEKLEVDVIQ.

As to quaternary structure, interacts with DTNB. Expressed in brain. Detected in mature neurons.

The protein localises to the nucleus. Plays a role in neuronal differentiation as chromatin-associated protein. Acts as inhibitor of HMG20B. Overcomes the repressive effects of the neuronal silencer REST and induces the activation of neuronal-specific genes. Involved in the recruitment of the histone methyltransferase KMT2A/MLL1 and consequent increased methylation of histone H3 lysine 4. This is High mobility group protein 20A (Hmg20a) from Mus musculus (Mouse).